The sequence spans 585 residues: Nitrogen permease regulator 3-like protein (585 aa).

Positions 117 to 157 (GEWAKRRKPRTTVESNASSSHLVSKPESSHPSTGSFEVKSS) are disordered. Positions 128 to 138 (TVESNASSSHL) are enriched in polar residues. Positions 148-157 (STGSFEVKSS) are enriched in low complexity.

It belongs to the NPR3 family.

The protein is Nitrogen permease regulator 3-like protein of Schizosaccharomyces pombe (strain 972 / ATCC 24843) (Fission yeast).